Consider the following 509-residue polypeptide: Putative ATP-dependent RNA helicase QP509L (509 aa).

Positions 110 to 262 (KKLLSPYGRF…KIIIHHLGQP (153 aa)) constitute a Helicase ATP-binding domain. 123–130 (LNTGLGKT) contacts ATP. The DEAH box signature appears at 215–218 (DEAH).

Belongs to the DEAD box helicase family. DEAH subfamily.

The catalysed reaction is ATP + H2O = ADP + phosphate + H(+). The chain is Putative ATP-dependent RNA helicase QP509L from African swine fever virus (strain Badajoz 1971 Vero-adapted) (Ba71V).